Here is a 144-residue protein sequence, read N- to C-terminus: Methylglyoxal synthase (144 aa).

In terms of domain architecture, MGS-like spans 1-144; the sequence is MNIALIAHDE…EEEQRKFLTD (144 aa). Residues histidine 8, lysine 12, 34-37, and 54-55 each bind substrate; these read TGTT and SG. Aspartate 60 functions as the Proton donor/acceptor in the catalytic mechanism. Histidine 87 is a substrate binding site.

Belongs to the methylglyoxal synthase family.

It carries out the reaction dihydroxyacetone phosphate = methylglyoxal + phosphate. Its function is as follows. Catalyzes the formation of methylglyoxal from dihydroxyacetone phosphate. This is Methylglyoxal synthase from Exiguobacterium sibiricum (strain DSM 17290 / CCUG 55495 / CIP 109462 / JCM 13490 / 255-15).